The following is a 353-amino-acid chain: Photosystem II protein D1 (353 aa).

Threonine 2 is subject to N-acetylthreonine. Threonine 2 is subject to Phosphothreonine. Transmembrane regions (helical) follow at residues 29–46 (YIGWFGVLMIPTLLTATS), 118–133 (HFLLGVACYMGREWEL), and 142–156 (WIAVAYSAPVAAATA). Histidine 118 provides a ligand contact to chlorophyll a. Tyrosine 126 serves as a coordination point for pheophytin a. 2 residues coordinate [CaMn4O5] cluster: aspartate 170 and glutamate 189. Residues 197–218 (FHMLGVAGVFGGSLFSAMHGSL) form a helical membrane-spanning segment. Histidine 198 contributes to the chlorophyll a binding site. Residues histidine 215 and 264-265 (SF) contribute to the a quinone site. Histidine 215 contacts Fe cation. Histidine 272 is a Fe cation binding site. The helical transmembrane segment at 274–288 (FLAAWPVVGIWFTAL) threads the bilayer. [CaMn4O5] cluster-binding residues include histidine 332, glutamate 333, aspartate 342, and alanine 344. A propeptide spanning residues 345–353 (AVEAPSTNG) is cleaved from the precursor.

The protein belongs to the reaction center PufL/M/PsbA/D family. As to quaternary structure, PSII is composed of 1 copy each of membrane proteins PsbA, PsbB, PsbC, PsbD, PsbE, PsbF, PsbH, PsbI, PsbJ, PsbK, PsbL, PsbM, PsbT, PsbX, PsbY, PsbZ, Psb30/Ycf12, at least 3 peripheral proteins of the oxygen-evolving complex and a large number of cofactors. It forms dimeric complexes. The D1/D2 heterodimer binds P680, chlorophylls that are the primary electron donor of PSII, and subsequent electron acceptors. It shares a non-heme iron and each subunit binds pheophytin, quinone, additional chlorophylls, carotenoids and lipids. D1 provides most of the ligands for the Mn4-Ca-O5 cluster of the oxygen-evolving complex (OEC). There is also a Cl(-1) ion associated with D1 and D2, which is required for oxygen evolution. The PSII complex binds additional chlorophylls, carotenoids and specific lipids. serves as cofactor. Tyr-161 forms a radical intermediate that is referred to as redox-active TyrZ, YZ or Y-Z. Post-translationally, C-terminally processed by CTPA; processing is essential to allow assembly of the oxygen-evolving complex and thus photosynthetic growth.

The protein resides in the plastid. Its subcellular location is the chloroplast thylakoid membrane. It catalyses the reaction 2 a plastoquinone + 4 hnu + 2 H2O = 2 a plastoquinol + O2. Its function is as follows. Photosystem II (PSII) is a light-driven water:plastoquinone oxidoreductase that uses light energy to abstract electrons from H(2)O, generating O(2) and a proton gradient subsequently used for ATP formation. It consists of a core antenna complex that captures photons, and an electron transfer chain that converts photonic excitation into a charge separation. The D1/D2 (PsbA/PsbD) reaction center heterodimer binds P680, the primary electron donor of PSII as well as several subsequent electron acceptors. This Nymphaea alba (White water-lily) protein is Photosystem II protein D1.